We begin with the raw amino-acid sequence, 674 residues long: Glutaminase kidney isoform, mitochondrial (674 aa).

The transit peptide at 1–54 (MMRLRGSAMLRELLLRPPAAVGAVLRRAQPLGTLCRRPRGGSRPTAGLVAAARL) directs the protein to the mitochondrion. Positions 56 to 123 (PWWGGGGRAK…PGETDAFGNS (68 aa)) are disordered. The segment covering 58 to 71 (WGGGGRAKGPGAGG) has biased composition (gly residues). Low complexity predominate over residues 89–101 (PPQQQQQQQQQPG). N6-succinyllysine occurs at positions 135 and 169. S291 lines the substrate pocket. K316 carries the N6-acetyllysine modification. The interval 320-327 (GLRFNKLF) is highly mobile activation loop. Substrate contacts are provided by N340, E386, N393, Y419, Y471, and V489. ANK repeat units lie at residues 590 to 619 (DSRTALHVAAAEGHVEVVKFLLEACKVNPF) and 624 to 653 (WNNTPMDEALHFGHHDVFKILQEYQVQYTP). The segment at 652 to 674 (TPQGDSDDGKGNQTVHKNLDGLL) is disordered. Position 657 is a phosphoserine (S657).

It belongs to the glutaminase family. Homotetramer, dimer of dimers. The tetramers can assemble into rod-like oligomers (in vitro), but the physiological significance of this is not clear. Interacts with RAF1 and MAP2K2. Interacts with ATCAY; the interaction is direct and may control GLS localization, negatively regulating its activity. Post-translationally, synthesized as a 74-kDa cytosolic precursor which is proteolytically processed by the mitochondrial-processing peptidase (MPP) via a 72-kDa intermediate to yield the mature mitochondrial 68- and 65-kDa subunits.

It localises to the mitochondrion. It is found in the cytoplasm. Its subcellular location is the cytosol. The protein resides in the mitochondrion matrix. The catalysed reaction is L-glutamine + H2O = L-glutamate + NH4(+). Its activity is regulated as follows. Isoform 1 and isoform 2 are activated by phosphate, due to increased affinity for glutamine. At phosphate concentrations above 10 mM, isoform 2 is more efficient than isoform 1. Catalyzes the first reaction in the primary pathway for the renal catabolism of glutamine. Plays a role in maintaining acid-base homeostasis. Regulates the levels of the neurotransmitter glutamate, the main excitatory neurotransmitter in the brain. The polypeptide is Glutaminase kidney isoform, mitochondrial (Gls) (Mus musculus (Mouse)).